The chain runs to 374 residues: Flap endonuclease 1 (374 aa).

The tract at residues 1–105 (MGVKGLNKLI…GELEKRLLRR (105 aa)) is N-domain. Position 34 (Asp-34) interacts with Mg(2+). The DNA site is built by Arg-47 and Arg-71. Residues Asp-87, Glu-159, Glu-161, Asp-180, and Asp-182 each contribute to the Mg(2+) site. The tract at residues 123–254 (DHLKFEKRLV…VTAYKLIKEH (132 aa)) is I-domain. Glu-159 lines the DNA pocket. 2 residues coordinate DNA: Gly-232 and Asp-234. Mg(2+) is bound at residue Asp-234. Residues 339-347 (VQGRLDSFF) are interaction with PCNA. A disordered region spans residues 353-374 (DDGKDKKRKSTAKDTKSKKQKK).

Belongs to the XPG/RAD2 endonuclease family. FEN1 subfamily. In terms of assembly, interacts with PCNA. Three molecules of RAD27 bind to one PCNA trimer with each molecule binding to one PCNA monomer. PCNA stimulates the nuclease activity without altering cleavage specificity. Mg(2+) is required as a cofactor. In terms of processing, phosphorylated. Phosphorylation upon DNA damage induces relocalization to the nuclear plasma.

It is found in the nucleus. The protein resides in the nucleolus. Its subcellular location is the nucleoplasm. It localises to the mitochondrion. Its function is as follows. Structure-specific nuclease with 5'-flap endonuclease and 5'-3' exonuclease activities involved in DNA replication and repair. During DNA replication, cleaves the 5'-overhanging flap structure that is generated by displacement synthesis when DNA polymerase encounters the 5'-end of a downstream Okazaki fragment. It enters the flap from the 5'-end and then tracks to cleave the flap base, leaving a nick for ligation. Also involved in the long patch base excision repair (LP-BER) pathway, by cleaving within the apurinic/apyrimidinic (AP) site-terminated flap. Acts as a genome stabilization factor that prevents flaps from equilibrating into structures that lead to duplications and deletions. Also possesses 5'-3' exonuclease activity on nicked or gapped double-stranded DNA, and exhibits RNase H activity. Also involved in replication and repair of rDNA and in repairing mitochondrial DNA. The chain is Flap endonuclease 1 from Candida tropicalis (strain ATCC MYA-3404 / T1) (Yeast).